The primary structure comprises 345 residues: NADH-quinone oxidoreductase subunit H (345 aa).

Over 1-15 the chain is Lumenal; the sequence is MADFWATSLGQTLIL. The chain crosses the membrane as a helical span at residues 16 to 35; the sequence is LAQGLGIIAFVMIGLLLLVW. Residues 36–86 are Cytoplasmic-facing; the sequence is GDRKIWAAVQMRKGPNVVGAFGLLQSVADAAKYVFKEIVVPAGVDKPVYFL. The chain crosses the membrane as a helical span at residues 87 to 106; the sequence is APMLSLVLALLAWVVVPFNE. Over 107-110 the chain is Lumenal; sequence GWVM. A helical transmembrane segment spans residues 111–130; the sequence is ADINVAVLFVFAVSSLEVYG. The Cytoplasmic segment spans residues 131-156; that stretch reads VIMGGWASNSKYPFLGSLRSAAQMIS. The helical transmembrane segment at 157–176 threads the bilayer; sequence YEVSMGLIIVGVIISTGSMN. Topologically, residues 177–191 are lumenal; sequence LSAIVEAQRGDFGLL. The chain crosses the membrane as a helical span at residues 192 to 211; sequence NWYWLPHLPMVALFFISALA. The Cytoplasmic segment spans residues 212-245; it reads ETNRPPFDLPEAESELVAGFMVEYSSTPYLLFMA. The chain crosses the membrane as a helical span at residues 246-265; it reads GEYIAVWLMCALTSVLFFGG. Over 266–276 the chain is Lumenal; sequence WLSPIPGVPDG. A helical membrane pass occupies residues 277-296; that stretch reads VLWMVAKMAAVFFVFAMVKA. Topologically, residues 297-313 are cytoplasmic; the sequence is IVPRYRYDQLMRIGWKV. A helical membrane pass occupies residues 314–333; it reads FLPLSLAWVVVVAFLAKFEV. Topologically, residues 334–345 are lumenal; it reads LGGFWARWSIGA.

This sequence belongs to the complex I subunit 1 family. As to quaternary structure, NDH-1 is composed of 14 different subunits. Subunits NuoA, H, J, K, L, M, N constitute the membrane sector of the complex.

It is found in the cellular chromatophore membrane. It catalyses the reaction a quinone + NADH + 5 H(+)(in) = a quinol + NAD(+) + 4 H(+)(out). Its function is as follows. NDH-1 shuttles electrons from NADH, via FMN and iron-sulfur (Fe-S) centers, to quinones in the respiratory chain. The immediate electron acceptor for the enzyme in this species is believed to be ubiquinone. Couples the redox reaction to proton translocation (for every two electrons transferred, four hydrogen ions are translocated across the cytoplasmic membrane), and thus conserves the redox energy in a proton gradient. This subunit may bind ubiquinone. In Rhodobacter capsulatus (Rhodopseudomonas capsulata), this protein is NADH-quinone oxidoreductase subunit H.